Reading from the N-terminus, the 293-residue chain is Proline iminopeptidase (293 aa).

Residues 28-277 enclose the AB hydrolase-1 domain; the sequence is KPLVLLHGGP…FSRHMPFVEE (250 aa). S104 serves as the catalytic Nucleophile. The active site involves D244. Catalysis depends on H271, which acts as the Proton donor.

It belongs to the peptidase S33 family.

It carries out the reaction Release of N-terminal proline from a peptide.. In terms of biological role, releases the N-terminal proline from various substrates. This chain is Proline iminopeptidase, found in Clostridium botulinum (strain Hall / ATCC 3502 / NCTC 13319 / Type A).